The following is a 200-amino-acid chain: Phospholipase A2 inhibitor LNF1 (200 aa).

The signal sequence occupies residues Met1–Ser19. 8 cysteine pairs are disulfide-bonded: Cys22–Cys46, Cys25–Cys32, Cys39–Cys67, Cys73–Cys94, Cys95–Cys100, Cys118–Cys143, Cys136–Cys165, and Cys169–Cys191. The N-linked (GlcNAc...) asparagine glycan is linked to Asn176.

The protein belongs to the CNF-like-inhibitor family. Occurs as a mixture of oligomers. Tetrameric arrangement appears to be the predominant quaternary structure. Expressed by the liver.

The protein resides in the secreted. Its function is as follows. Inhibits the enzymatic activity of phospholipase A2 (PA2). The sequence is that of Phospholipase A2 inhibitor LNF1 from Lachesis muta muta (Bushmaster).